The following is a 333-amino-acid chain: CMP-N-acetylneuraminate-beta-galactosamide-alpha-2,3-sialyltransferase 4 (333 aa).

Topologically, residues 1-8 (MVSKSRWK) are cytoplasmic. The chain crosses the membrane as a helical; Signal-anchor for type II membrane protein span at residues 9 to 26 (LLAMLALVLVVMVWYSIS). Residues 27-333 (REDRYIELFY…MGAIKNLTSF (307 aa)) lie on the Lumenal side of the membrane. Residues asparagine 61, asparagine 131, asparagine 310, and asparagine 329 are each glycosylated (N-linked (GlcNAc...) asparagine). Cysteine 120 and cysteine 273 are oxidised to a cystine.

It belongs to the glycosyltransferase 29 family. In terms of processing, the soluble form derives from the membrane form by proteolytic processing. In terms of tissue distribution, highly expressed in adult placenta, heart and kidney.

Its subcellular location is the golgi apparatus. The protein localises to the golgi stack membrane. It localises to the secreted. It catalyses the reaction a beta-D-galactosyl-(1-&gt;3)-N-acetyl-beta-D-galactosaminyl derivative + CMP-N-acetyl-beta-neuraminate = an N-acetyl-alpha-neuraminyl-(2-&gt;3)-beta-D-galactosyl-(1-&gt;3)-N-acetyl-beta-D-galactosaminyl derivative + CMP + H(+). The enzyme catalyses a beta-D-galactosyl-(1-&gt;3)-N-acetyl-alpha-D-galactosaminyl derivative + CMP-N-acetyl-beta-neuraminate = an N-acetyl-alpha-neuraminyl-(2-&gt;3)-beta-D-galactosyl-(1-&gt;3)-N-acetyl-alpha-D-galactosaminyl derivative + CMP + H(+). The catalysed reaction is a beta-D-galactosyl-(1-&gt;4)-N-acetyl-beta-D-glucosaminyl derivative + CMP-N-acetyl-beta-neuraminate = an N-acetyl-alpha-neuraminyl-(2-&gt;3)-beta-D-galactosyl-(1-&gt;4)-N-acetyl-beta-D-glucosaminyl derivative + CMP + H(+). It carries out the reaction a ganglioside GM1 (d18:1(4E)) + CMP-N-acetyl-beta-neuraminate = a ganglioside GD1a (d18:1(4E)) + CMP + H(+). It catalyses the reaction a ganglioside GA1 (d18:1(4E)) + CMP-N-acetyl-beta-neuraminate = a ganglioside GM1b (d18:1(4E)) + CMP + H(+). The enzyme catalyses a ganglioside GT1c (d18:1(4E)) + CMP-N-acetyl-beta-neuraminate = a ganglioside GQ1c (d18:1(4E)) + CMP + H(+). The catalysed reaction is a neolactoside nLc4Cer + CMP-N-acetyl-beta-neuraminate = a neolactoside IV(3)-alpha-NeuAc-nLc4Cer + CMP + H(+). It carries out the reaction a neolactoside nLc4Cer(d18:1(4E)) + CMP-N-acetyl-beta-neuraminate = a neolactoside IV(3)-alpha-NeuAc-nLc4Cer(d18:1(4E)) + CMP + H(+). It functions in the pathway protein modification; protein glycosylation. It participates in glycolipid biosynthesis. A beta-galactoside alpha2-3 sialyltransferase involved in terminal sialylation of glycoproteins and glycolipids. Catalyzes the transfer of sialic acid (N-acetyl-neuraminic acid; Neu5Ac) from the nucleotide sugar donor CMP-Neu5Ac onto acceptor Galbeta-(1-&gt;3)-GalNAc- and Galbeta-(1-&gt;4)-GlcNAc-terminated glycoconjugates through an alpha2-3 linkage. Plays a major role in hemostasis. Responsible for sialylation of plasma VWF/von Willebrand factor, preventing its recognition by asialoglycoprotein receptors (ASGPR) and subsequent clearance. Regulates ASGPR-mediated clearance of platelets. Participates in the biosynthesis of the sialyl Lewis X epitopes, both on O- and N-glycans, which are recognized by SELE/E-selectin, SELP/P-selectin and SELL/L-selectin. Essential for selectin-mediated rolling and adhesion of leukocytes during extravasation. Contributes to adhesion and transendothelial migration of neutrophils likely through terminal sialylation of CXCR2. In glycosphingolipid biosynthesis, sialylates GM1 and GA1 gangliosides to form GD1a and GM1b, respectively. Metabolizes brain c-series ganglioside GT1c forming GQ1c. Synthesizes ganglioside LM1 (IV3Neu5Ac-nLc4Cer), a major structural component of peripheral nerve myelin. This Homo sapiens (Human) protein is CMP-N-acetylneuraminate-beta-galactosamide-alpha-2,3-sialyltransferase 4 (ST3GAL4).